Here is a 288-residue protein sequence, read N- to C-terminus: Probable proteasome subunit alpha type-7 (288 aa).

At Thr2 the chain carries N-acetylthreonine. The disordered stretch occupies residues 247 to 288 (INGDDDEDEDDSDNVMSSDDENAPVATNANATTDQEGDIHLE). Over residues 249 to 268 (GDDDEDEDDSDNVMSSDDEN) the composition is skewed to acidic residues. Residues 269–279 (APVATNANATT) show a composition bias toward low complexity.

The protein belongs to the peptidase T1A family. In terms of assembly, the 26S proteasome consists of a 20S proteasome core and two 19S regulatory subunits. The 20S proteasome core is composed of 28 subunits that are arranged in four stacked rings, resulting in a barrel-shaped structure. The two end rings are each formed by seven alpha subunits, and the two central rings are each formed by seven beta subunits. The catalytic chamber with the active sites is on the inside of the barrel. In terms of processing, the alpha and beta forms are probably products of the same gene with different post-translational modifications.

The protein resides in the cytoplasm. It is found in the nucleus. In terms of biological role, the proteasome degrades poly-ubiquitinated proteins in the cytoplasm and in the nucleus. It is essential for the regulated turnover of proteins and for the removal of misfolded proteins. The proteasome is a multicatalytic proteinase complex that is characterized by its ability to cleave peptides with Arg, Phe, Tyr, Leu, and Glu adjacent to the leaving group at neutral or slightly basic pH. It has an ATP-dependent proteolytic activity. The protein is Probable proteasome subunit alpha type-7 (PRE10) of Saccharomyces cerevisiae (strain ATCC 204508 / S288c) (Baker's yeast).